Reading from the N-terminus, the 350-residue chain is Carbamoyl dehydratase HypE (350 aa).

Cysteine 350 is subject to S-carbamoylcysteine. Residue cysteine 350 is modified to S-cyanocysteine.

This sequence belongs to the HypE family. Post-translationally, modified by HypF, which adds a carboxamido group to the thiolate of the C-terminal cysteine, yielding a protein-S-carboxamide. The carboxamido group is then dehydrated by HypE itself to yield a protein-thiocyanate.

It catalyses the reaction C-terminal S-carboxamide-L-cysteinyl-[HypE protein] + ATP = C-terminal S-cyanate-L-cysteinyl-[HypE protein] + ADP + phosphate + H(+). Its pathway is protein modification; [NiFe] hydrogenase maturation. Functionally, involved in the maturation of [NiFe] hydrogenases. Along with HypF, it catalyzes the synthesis of the CN ligands of the active site iron of [NiFe]-hydrogenases. HypE catalyzes the ATP-dependent dehydration of the carboxamido group attached to its C-terminal cysteine to a cyano group. The protein is Carbamoyl dehydratase HypE of Rhizobium leguminosarum bv. viciae.